Consider the following 262-residue polypeptide: MSWYPGHIEKAKRQIKDLLRLVNTVVEVRDARAPFATSAYGVDFSRKETIILLNKVDIADEKTTKKWVEFFKKQGKRVITTHKGEPRKVLLKKLSFDRLARVLIVGVPNTGKSTIINKLKGKRASSVGAQPGITKGIQWFSLENGVKILDTPGILYKNIFSEDLAAKLLLVGSLPVERIEDQRIFERAFEIFARSIGIESSFSEFFEDFARKRGLLKKGGVPDIERALMLFFTEVAQGKAGRVSFERPEDITPVQQEQTRGV.

The region spanning 12 to 157 is the CP-type G domain; sequence KRQIKDLLRL…ILDTPGILYK (146 aa). GTP contacts are provided by residues 54 to 57, 109 to 114, and Gly153; these read NKVD and NTGKST.

This sequence belongs to the TRAFAC class YlqF/YawG GTPase family. MTG1 subfamily.

Its subcellular location is the cytoplasm. In terms of biological role, required for a late step of 50S ribosomal subunit assembly. Has GTPase activity. Binds to the 23S rRNA. The protein is Ribosome biogenesis GTPase A of Thermotoga maritima (strain ATCC 43589 / DSM 3109 / JCM 10099 / NBRC 100826 / MSB8).